Consider the following 423-residue polypeptide: D-tagatose-1,6-bisphosphate aldolase subunit GatZ (423 aa).

The protein belongs to the GatZ/KbaZ family. GatZ subfamily. Forms a complex with GatY.

The protein operates within carbohydrate metabolism; D-tagatose 6-phosphate degradation; D-glyceraldehyde 3-phosphate and glycerone phosphate from D-tagatose 6-phosphate: step 2/2. Its function is as follows. Component of the tagatose-1,6-bisphosphate aldolase GatYZ that is required for full activity and stability of the Y subunit. Could have a chaperone-like function for the proper and stable folding of GatY. When expressed alone, GatZ does not show any aldolase activity. Is involved in the catabolism of galactitol. This chain is D-tagatose-1,6-bisphosphate aldolase subunit GatZ, found in Salmonella gallinarum (strain 287/91 / NCTC 13346).